A 180-amino-acid chain; its full sequence is Probable chorismate pyruvate-lyase (180 aa).

Residues Arg82, Leu120, and Glu165 each coordinate substrate.

Belongs to the UbiC family.

The protein resides in the cytoplasm. The enzyme catalyses chorismate = 4-hydroxybenzoate + pyruvate. It functions in the pathway cofactor biosynthesis; ubiquinone biosynthesis. Removes the pyruvyl group from chorismate, with concomitant aromatization of the ring, to provide 4-hydroxybenzoate (4HB) for the ubiquinone pathway. This is Probable chorismate pyruvate-lyase from Photobacterium profundum (strain SS9).